Consider the following 79-residue polypeptide: Protein OPG081 (79 aa).

Topologically, residues 2–8 are intravirion; sequence VDAITVL. A helical transmembrane segment spans residues 9-29; the sequence is TAIGITVLMLLMVISGAALIV. Residues 30-47 lie on the Virion surface side of the membrane; it reads KELNPNDIFTMQSLKFNR. A helical transmembrane segment spans residues 48-68; the sequence is AVTIFKYIGLFIYIPGTIILY. Residues 69–79 are Intravirion-facing; that stretch reads ATYVKSLLMKS.

This sequence belongs to the orthopoxvirus OPG081 family.

The protein localises to the virion membrane. Envelope protein. The polypeptide is Protein OPG081 (OPG081) (Vaccinia virus (strain Western Reserve) (VACV)).